A 97-amino-acid chain; its full sequence is Sm-like protein LSM3A (97 aa).

The residue at position 2 (S2) is an N-acetylserine. Residues 11-96 (EPLDLIRLSI…VILVSPPLRT (86 aa)) form the Sm domain.

The protein belongs to the snRNP Sm proteins family. Component of the heptameric LSM1-LSM7 complex that forms a seven-membered ring structure with a donut shape. The LSM subunits are arranged in the order LSM1, LSM2, LSM3, LSM6, LSM5, LSM7 and LSM4. Component of the heptameric LSM2-LSM8 complex that forms a seven-membered ring structure with a donut shape. The LSM subunits are arranged in the order LSM8, LSM2, LSM3, LSM6, LSM5, LSM7 and LSM4. LSM3A subunit interacts only with its two neighboring subunits, LSM2 and LSM6A or LSM6B. In terms of tissue distribution, expressed in roots, leaves, stems, flowers and siliques.

It localises to the cytoplasm. The protein localises to the nucleus. In terms of biological role, component of LSM protein complexes, which are involved in RNA processing. Component of the cytoplasmic LSM1-LSM7 complex which is involved in mRNA degradation by promoting decapping and leading to accurate 5'-3' mRNA decay. The cytoplasmic LSM1-LSM7 complex regulates developmental gene expression by the decapping of specific development-related transcripts. Component of the nuclear LSM2-LSM8 complex which is involved splicing nuclear mRNAs. LSM2-LSM8 binds directly to the U6 small nuclear RNAs (snRNAs) and is essential for accurate splicing of selected development-related mRNAs through the stabilization of the spliceosomal U6 snRNA. Plays a critical role in the regulation of development-related gene expression. This is Sm-like protein LSM3A from Arabidopsis thaliana (Mouse-ear cress).